The sequence spans 565 residues: Liver carboxylesterase 1 (565 aa).

Positions 1 to 18 (MWLCALALASLAACTAWG) are cleaved as a signal peptide. Asn-79 carries an N-linked (GlcNAc...) asparagine glycan. A disulfide bridge links Cys-87 with Cys-116. The active-site Acyl-ester intermediate is Ser-221. A disulfide bridge connects residues Cys-273 and Cys-284. Glu-353 acts as the Charge relay system in catalysis. Asn-389 carries an N-linked (GlcNAc...) asparagine glycan. Residue His-467 is the Charge relay system of the active site. Leu-565 is a short sequence motif (prevents secretion from ER).

Belongs to the type-B carboxylesterase/lipase family. In terms of assembly, monomer.

It is found in the endoplasmic reticulum lumen. The catalysed reaction is a carboxylic ester + H2O = an alcohol + a carboxylate + H(+). Its function is as follows. Involved in the detoxification of xenobiotics and in the activation of ester and amide prodrugs. In Oryctolagus cuniculus (Rabbit), this protein is Liver carboxylesterase 1.